Reading from the N-terminus, the 786-residue chain is Ribosome biogenesis protein BOP1 homolog (786 aa).

The span at 1–11 shows a compositional bias: basic residues; sequence MTKKLTIKRKV. Residues 1-161 form a disordered region; it reads MTKKLTIKRK…DSDTSDEEDI (161 aa). 4 stretches are compositionally biased toward acidic residues: residues 28–37, 46–55, 62–74, and 86–103; these read DNEEEEEEDL, EDSTDDEGID, SSEDLEFESDEEG, and SGDDDEESAEDEEEEDDA. The segment covering 104–113 has biased composition (basic and acidic residues); sequence DAKKSSKNND. Residues 151–160 are compositionally biased toward acidic residues; the sequence is ADSDTSDEED. WD repeat units follow at residues 447 to 488, 490 to 528, 572 to 614, 617 to 655, 658 to 697, 701 to 740, and 756 to 786; these read GHTD…RTIE, EDVVRCVAWCPNAKLSIIAVATGSRLLLVNPKVGDKLLV, THFK…SQIP, KSKGLIQCVLFHPVKPCFFVATQHNIRIYDLVKQELIKK, TNSKWISGMSIHPKGDNLLVSTYDKKMLWFDLDLSTKPYQ, LHRNAVRSVAFHLRYPLFASGSDDQAVIVSHGMVYNDLLQ, and REEFGVLDVNWHPVQPWVFSTGADCTIRLFT.

This sequence belongs to the WD repeat BOP1/ERB1 family.

The protein resides in the nucleus. Its subcellular location is the nucleolus. It localises to the nucleoplasm. In terms of biological role, required for maturation of ribosomal RNAs and formation of the large ribosomal subunit. This Drosophila pseudoobscura pseudoobscura (Fruit fly) protein is Ribosome biogenesis protein BOP1 homolog.